The chain runs to 238 residues: 2-C-methyl-D-erythritol 4-phosphate cytidylyltransferase (238 aa).

It belongs to the IspD/TarI cytidylyltransferase family. IspD subfamily.

It catalyses the reaction 2-C-methyl-D-erythritol 4-phosphate + CTP + H(+) = 4-CDP-2-C-methyl-D-erythritol + diphosphate. The protein operates within isoprenoid biosynthesis; isopentenyl diphosphate biosynthesis via DXP pathway; isopentenyl diphosphate from 1-deoxy-D-xylulose 5-phosphate: step 2/6. Functionally, catalyzes the formation of 4-diphosphocytidyl-2-C-methyl-D-erythritol from CTP and 2-C-methyl-D-erythritol 4-phosphate (MEP). The chain is 2-C-methyl-D-erythritol 4-phosphate cytidylyltransferase from Salinibacter ruber (strain DSM 13855 / M31).